The sequence spans 270 residues: 4-hydroxy-tetrahydrodipicolinate reductase (270 aa).

Residues 8 to 13 (GALGRM), Asp-34, 102 to 104 (GTT), and 128 to 131 (SQNY) contribute to the NAD(+) site. His-160 functions as the Proton donor/acceptor in the catalytic mechanism. His-161 contacts (S)-2,3,4,5-tetrahydrodipicolinate. The active-site Proton donor is Lys-164. 170-171 (GT) serves as a coordination point for (S)-2,3,4,5-tetrahydrodipicolinate.

Belongs to the DapB family.

It localises to the cytoplasm. The enzyme catalyses (S)-2,3,4,5-tetrahydrodipicolinate + NAD(+) + H2O = (2S,4S)-4-hydroxy-2,3,4,5-tetrahydrodipicolinate + NADH + H(+). The catalysed reaction is (S)-2,3,4,5-tetrahydrodipicolinate + NADP(+) + H2O = (2S,4S)-4-hydroxy-2,3,4,5-tetrahydrodipicolinate + NADPH + H(+). Its pathway is amino-acid biosynthesis; L-lysine biosynthesis via DAP pathway; (S)-tetrahydrodipicolinate from L-aspartate: step 4/4. In terms of biological role, catalyzes the conversion of 4-hydroxy-tetrahydrodipicolinate (HTPA) to tetrahydrodipicolinate. This chain is 4-hydroxy-tetrahydrodipicolinate reductase, found in Methanococcus maripaludis (strain C7 / ATCC BAA-1331).